The primary structure comprises 1953 residues: Putative surface-exposed virulence protein BigA (1953 aa).

The first 27 residues, 1–27 (MNPMQKKKLISIAIALTLQSYYIPAIA), serve as a signal peptide directing secretion. Disordered stretches follow at residues 31–50 (NDDEKECPSNISSLPKEKRA), 88–258 (GGGD…TFSN), and 1496–1517 (TTAPTEGSIPTPPADPNAPQQL). One copy of the 1; truncated repeat lies at 101-103 (PDN). A 15 X 11 AA tandem repeats region spans residues 101 to 252 (PDNGGDVTPP…DDDDTPPDDS (152 aa)). Residues 104–113 (GGDVTPPDDG) form a 2; truncated repeat. The stretch at 114-122 (GNVTPPDDG) is one 3; truncated repeat. 11 repeat units span residues 123–133 (GNVTPPDDGGD), 134–144 (DNVTPPDDSGD), 145–155 (DDVAPPDDSGD), 156–166 (DDVTPPDDSGD), 167–177 (DDVTPPDDSGD), 178–188 (GDVTPPDDSGD), 189–199 (DDVTPPDDSGD), 200–210 (DDVTPPDDSGD), 211–221 (DDVTPPDDSGD), 222–232 (DDVTPPDDSGD), and 233–243 (DDVTPPDDSGD). Acidic residues-rich tracts occupy residues 141–177 (DSGDDDVAPPDDSGDDDVTPPDDSGDDDVTPPDDSGD) and 185–249 (DSGD…DTPP). The stretch at 244 to 252 (DDDTPPDDS) is one 15; truncated repeat. In terms of domain architecture, Autotransporter spans 1649-1952 (SGAQATTVFR…GFMLNVKKTF (304 aa)).

This is Putative surface-exposed virulence protein BigA (bigA) from Salmonella typhimurium (strain LT2 / SGSC1412 / ATCC 700720).